Reading from the N-terminus, the 414-residue chain is Isocitrate dehydrogenase [NADP] cytoplasmic (414 aa).

The residue at position 2 (Ser2) is an N-acetylserine. Tyr42 carries the post-translational modification Phosphotyrosine. 75 to 77 (TIT) lines the NADP(+) pocket. Thr77 is a binding site for substrate. Lys81 carries the post-translational modification N6-acetyllysine. Arg82 is an NADP(+) binding site. Residues 94–100 (SPNGTIR) and Arg109 each bind substrate. At Lys126 the chain carries N6-succinyllysine. Residues Arg132 and Lys212 each contribute to the substrate site. N6-acetyllysine occurs at positions 224, 233, and 243. Asp252 lines the Mn(2+) pocket. Lys260 lines the NADP(+) pocket. Residues Asp275 and Asp279 each coordinate Mn(2+). 310-315 (GTVTRH) serves as a coordination point for NADP(+). Lys321 carries the N6-acetyllysine modification. Position 328 (Asn328) interacts with NADP(+). Ser389 is subject to Phosphoserine. Lys400 is modified (N6-succinyllysine).

Belongs to the isocitrate and isopropylmalate dehydrogenases family. As to quaternary structure, homodimer. Mg(2+) serves as cofactor. Requires Mn(2+) as cofactor. In terms of processing, acetylation at Lys-374 dramatically reduces catalytic activity.

The protein localises to the cytoplasm. The protein resides in the cytosol. The enzyme catalyses D-threo-isocitrate + NADP(+) = 2-oxoglutarate + CO2 + NADPH. Its function is as follows. Catalyzes the NADP(+)-dependent oxidative decarboxylation of isocitrate (D-threo-isocitrate) to 2-ketoglutarate (2-oxoglutarate), which is required by other enzymes such as the phytanoyl-CoA dioxygenase. Plays a critical role in the generation of NADPH, an important cofactor in many biosynthesis pathways. May act as a corneal epithelial crystallin and may be involved in maintaining corneal epithelial transparency. The protein is Isocitrate dehydrogenase [NADP] cytoplasmic (IDH1) of Pongo abelii (Sumatran orangutan).